The following is a 589-amino-acid chain: Sentrin-specific protease 2 (589 aa).

The Nuclear localization signal motif lies at 28-31 (KRRR). Phosphoserine is present on S32. Positions 46-51 (PAKRPR) match the Nuclear localization signal motif. Positions 155-176 (SEGCNRRPGGRRHSKGNPESSL) are disordered. The short motif at 317-332 (LEPDLSEEVSARLRLG) is the Nuclear export signal element. 2 positions are modified to phosphoserine: S333 and S344. Residues 396–560 (RITRGDIQTL…FTCKYADYIS (165 aa)) are protease. Catalysis depends on residues H478 and D495. Catalysis depends on C548, which acts as the Nucleophile.

Belongs to the peptidase C48 family. As to quaternary structure, binds to SUMO2 and SUMO3. Interacts with the C-terminal domain of NUP153 via its N-terminus. Interacts with MTA1. Polyubiquitinated; which leads to proteasomal degradation.

It is found in the nucleus. Its subcellular location is the nuclear pore complex. The protein resides in the nucleus membrane. It localises to the cytoplasm. Protease that catalyzes two essential functions in the SUMO pathway. The first is the hydrolysis of an alpha-linked peptide bond at the C-terminal end of the small ubiquitin-like modifier (SUMO) propeptides, SUMO1, SUMO2 and SUMO3 leading to the mature form of the proteins. The second is the deconjugation of SUMO1, SUMO2 and SUMO3 from targeted proteins, by cleaving an epsilon-linked peptide bond between the C-terminal glycine of the mature SUMO and the lysine epsilon-amino group of the target protein. May down-regulate CTNNB1 levels and thereby modulate the Wnt pathway. Deconjugates SUMO2 from MTA1. Plays a dynamic role in adipogenesis by desumoylating and promoting the stabilization of CEBPB. Acts as a regulator of the cGAS-STING pathway by catalyzing desumoylation of CGAS and STING1 during the late phase of viral infection. In Homo sapiens (Human), this protein is Sentrin-specific protease 2.